A 735-amino-acid polypeptide reads, in one-letter code: 1,4-alpha-glucan branching enzyme GlgB (735 aa).

The active-site Nucleophile is Asp-418. Catalysis depends on Glu-471, which acts as the Proton donor.

Belongs to the glycosyl hydrolase 13 family. GlgB subfamily. In terms of assembly, monomer.

The enzyme catalyses Transfers a segment of a (1-&gt;4)-alpha-D-glucan chain to a primary hydroxy group in a similar glucan chain.. It functions in the pathway glycan biosynthesis; glycogen biosynthesis. Its function is as follows. Catalyzes the formation of the alpha-1,6-glucosidic linkages in glycogen by scission of a 1,4-alpha-linked oligosaccharide from growing alpha-1,4-glucan chains and the subsequent attachment of the oligosaccharide to the alpha-1,6 position. This chain is 1,4-alpha-glucan branching enzyme GlgB, found in Agrobacterium fabrum (strain C58 / ATCC 33970) (Agrobacterium tumefaciens (strain C58)).